A 423-amino-acid chain; its full sequence is Histidine--tRNA ligase (423 aa).

Belongs to the class-II aminoacyl-tRNA synthetase family. As to quaternary structure, homodimer.

It is found in the cytoplasm. The enzyme catalyses tRNA(His) + L-histidine + ATP = L-histidyl-tRNA(His) + AMP + diphosphate + H(+). The sequence is that of Histidine--tRNA ligase (hisS) from Mycobacterium bovis (strain ATCC BAA-935 / AF2122/97).